The primary structure comprises 865 residues: Bifunctional uridylyltransferase/uridylyl-removing enzyme (865 aa).

Positions 1-318 are uridylyltransferase; sequence MPHVDLNPLK…FPRPDSDARL (318 aa). Positions 319-675 are uridylyl-removing; it reads IDDDFRNLRE…VRPTEHGEGL (357 aa). The 123-residue stretch at 437-559 folds into the HD domain; that stretch reads VDQHTLAVVR…VGDERRLAAL (123 aa). ACT domains are found at residues 676 to 762 and 789 to 865; these read QVMV…RLPH and RLSV…QQAA. The segment at 747-767 is disordered; sequence DPHAARHAHAPRRLPHSHARR. Residues 751 to 767 show a composition bias toward basic residues; that stretch reads ARHAHAPRRLPHSHARR.

Belongs to the GlnD family. Mg(2+) serves as cofactor.

It carries out the reaction [protein-PII]-L-tyrosine + UTP = [protein-PII]-uridylyl-L-tyrosine + diphosphate. The enzyme catalyses [protein-PII]-uridylyl-L-tyrosine + H2O = [protein-PII]-L-tyrosine + UMP + H(+). With respect to regulation, uridylyltransferase (UTase) activity is inhibited by glutamine, while glutamine activates uridylyl-removing (UR) activity. In terms of biological role, modifies, by uridylylation and deuridylylation, the PII regulatory proteins (GlnB and homologs), in response to the nitrogen status of the cell that GlnD senses through the glutamine level. Under low glutamine levels, catalyzes the conversion of the PII proteins and UTP to PII-UMP and PPi, while under higher glutamine levels, GlnD hydrolyzes PII-UMP to PII and UMP (deuridylylation). Thus, controls uridylylation state and activity of the PII proteins, and plays an important role in the regulation of nitrogen assimilation and metabolism. The polypeptide is Bifunctional uridylyltransferase/uridylyl-removing enzyme (Bordetella parapertussis (strain 12822 / ATCC BAA-587 / NCTC 13253)).